The chain runs to 424 residues: Enolase (424 aa).

Gln162 contributes to the (2R)-2-phosphoglycerate binding site. The active-site Proton donor is the Glu204. The Mg(2+) site is built by Asp241, Glu284, and Asp311. Residues Lys336, Arg365, Ser366, and Lys387 each contribute to the (2R)-2-phosphoglycerate site. Residue Lys336 is the Proton acceptor of the active site.

This sequence belongs to the enolase family. The cofactor is Mg(2+).

Its subcellular location is the cytoplasm. It is found in the secreted. The protein resides in the cell surface. It carries out the reaction (2R)-2-phosphoglycerate = phosphoenolpyruvate + H2O. Its pathway is carbohydrate degradation; glycolysis; pyruvate from D-glyceraldehyde 3-phosphate: step 4/5. Its function is as follows. Catalyzes the reversible conversion of 2-phosphoglycerate (2-PG) into phosphoenolpyruvate (PEP). It is essential for the degradation of carbohydrates via glycolysis. This Sinorhizobium medicae (strain WSM419) (Ensifer medicae) protein is Enolase.